The sequence spans 856 residues: DNA mismatch repair protein MutS (856 aa).

607 to 614 (GPNMAGKS) contacts ATP.

Belongs to the DNA mismatch repair MutS family.

Functionally, this protein is involved in the repair of mismatches in DNA. It is possible that it carries out the mismatch recognition step. This protein has a weak ATPase activity. This chain is DNA mismatch repair protein MutS, found in Cytophaga hutchinsonii (strain ATCC 33406 / DSM 1761 / CIP 103989 / NBRC 15051 / NCIMB 9469 / D465).